The following is a 158-amino-acid chain: Endoribonuclease YbeY (158 aa).

Zn(2+) is bound by residues H117, H121, and H127.

This sequence belongs to the endoribonuclease YbeY family. Zn(2+) is required as a cofactor.

The protein resides in the cytoplasm. In terms of biological role, single strand-specific metallo-endoribonuclease involved in late-stage 70S ribosome quality control and in maturation of the 3' terminus of the 16S rRNA. This chain is Endoribonuclease YbeY, found in Buchnera aphidicola subsp. Schizaphis graminum (strain Sg).